The primary structure comprises 194 residues: Mitochondrial import inner membrane translocase subunit Tim22 (194 aa).

2 cysteine pairs are disulfide-bonded: C69-C141 and C160-C179. 3 consecutive transmembrane segments (helical) span residues 74–94, 123–143, and 170–190; these read ALAC…TAGI, MSYA…ECLI, and AGLK…AAID.

It belongs to the Tim17/Tim22/Tim23 family. Component of the TIM22 complex, whose core is composed of TIMM22, associated with peripheral protein FXC1/TIMM10B and the 70 kDa heterohexamer. In most cases, the 70 kDa complex is composed of TIMM9 and TIMM10 (TIMM10A or TIMM10B). A small fraction of the 70 kDa complex is composed of TIMM8 (TIMM8A/DDP1 or TIMM8B/DDP2) and TIMM13. The TIM22 complex also contains AGK and TIMM29. Interacts directly with TIMM9, TIMM10A and FXC1/TIMM10B. Interacts (when oxidized) with TIMM29; interaction is direct. Post-translationally, disulfide bonds promote efficient assembly of the TIM22 complex.

Its subcellular location is the mitochondrion inner membrane. Functionally, essential core component of the TIM22 complex, a complex that mediates the import and insertion of multi-pass transmembrane proteins into the mitochondrial inner membrane. In the TIM22 complex, it constitutes the voltage-activated and signal-gated channel. Forms a twin-pore translocase that uses the membrane potential as external driving force in 2 voltage-dependent steps. The chain is Mitochondrial import inner membrane translocase subunit Tim22 (TIMM22) from Homo sapiens (Human).